The following is an 860-amino-acid chain: Putative mixed-linked glucan synthase 1 (860 aa).

The next 2 membrane-spanning stretches (helical) occupy residues 63–83 (ILHP…AFFA) and 93–113 (GAWL…SWVL). D183 is an active-site residue. Residues 235–263 (ELMSDHRRVRREYEEFKVRIDSLSSTIRQ) adopt a coiled-coil conformation. Positions 381 and 383 each coordinate substrate. Residue D549 is part of the active site. 6 helical membrane passes run 625-645 (TYPI…MWLI), 655-675 (FGEY…IGMF), 693-713 (FYMI…ALKL), 747-767 (LLIP…VAVG), 781-801 (LAVL…PFAL), and 812-832 (AVLF…YVAF).

It belongs to the glycosyltransferase 2 family. Plant cellulose synthase-like F subfamily.

Its subcellular location is the golgi apparatus membrane. May catalyze both beta-1,3 and beta-1,4 glycosidic linkage on beta-D-glucan. Essential for (1,3;1,4)-beta-D-glucans synthesis in grasses and cereals (Poaceae). The mixed-linked glucans (which are not present in walls of dicotyledons or most other monocotyledonous plants) are particularly important constituents of the walls of the starchy endosperm and aleurone cells of cereal grains such as oats, wheat, rice and barley. They can account for up to 70% by weight of the wall. In Oryza sativa subsp. japonica (Rice), this protein is Putative mixed-linked glucan synthase 1 (CSFL1).